A 630-amino-acid chain; its full sequence is Eukaryotic translation initiation factor 2-alpha kinase 1 (630 aa).

The disordered stretch occupies residues 1–40 (MQGGNSGVRKREEEGDGAGAVAAPPAIDFPAEGPDPEYDE). The short motif at 85-104 (LRSRQVFKLLCQTFIKMGLL) is the SIFI-degron element. A Protein kinase domain is found at 167–583 (FEELAILGKG…AIQLLQSELF (417 aa)). Residues 173-181 (LGKGGYGRV) and lysine 196 contribute to the ATP site. The interval 259 to 301 (DQEEDREQCGVKNDESSSSSIIFAEPTPEKEKRFGESDTENQN) is disordered. Position 285 is a phosphothreonine (threonine 285). Over residues 285 to 294 (TPEKEKRFGE) the composition is skewed to basic and acidic residues. The stretch at 410–415 (ACPYVM) is one HRM 1 repeat. Aspartate 442 serves as the catalytic Proton acceptor. Threonine 486 and threonine 488 each carry phosphothreonine; by autocatalysis. The residue at position 493 (threonine 493) is a Phosphothreonine. The stretch at 552-557 (RCPVQA) is one HRM 2 repeat.

This sequence belongs to the protein kinase superfamily. Ser/Thr protein kinase family. GCN2 subfamily. In terms of assembly, synthesized in an inactive form that binds to the N-terminal domain of CDC37. Has to be associated with a multiprotein complex containing Hsp90, CDC37 and PPP5C for maturation and activation by autophosphorylation. The phosphatase PPP5C modulates this activation. Homodimer; homodimerizes in presence of heme, forming a disulfide-linked inactive homodimer. Interacts with DELE1; binds both to full-length DELE1 and processed form of DELE1 (S-DELE1) in response to stress, leading to activate its protein kinase activity and trigger the integrated stress response (ISR). In terms of processing, activated by autophosphorylation; phosphorylated predominantly on serine and threonine residues, but also on tyrosine residues. Autophosphorylation at Thr-488 is required for kinase activation. The active autophosphorylated form apparently is largely refractory to cellular heme fluctuations. Post-translationally, ubiquitinated and degraded by the SIFI complex once the mitochondrial stress has been resolved, thereby providing stress response silencing. Within the SIFI complex, UBR4 initiates ubiquitin chain that are further elongated or branched by KCMF1.

The enzyme catalyses L-seryl-[protein] + ATP = O-phospho-L-seryl-[protein] + ADP + H(+). It carries out the reaction L-threonyl-[protein] + ATP = O-phospho-L-threonyl-[protein] + ADP + H(+). Its activity is regulated as follows. In normal conditions, the protein kinase activity is inhibited; inhibition is relieved by various stress conditions. Inhibited by heme: in presence of heme, forms a disulfide-linked inactive homodimer. Heme depletion relieves inhibition and stimulates kinase activity by autophosphorylation. Inhibited by the heme metabolites biliverdin and bilirubin. Induced by oxidative stress generated by arsenite treatment. Binding of nitric oxide (NO) to the heme iron in the N-terminal heme-binding domain activates the kinase activity, while binding of carbon monoxide (CO) suppresses kinase activity. Protein kinase activity is also activated upon binding to DELE1 in response to various stress, triggering the integrated stress response (ISR): activated by full-length DELE1 in response to iron deficiency, while it is activated by the processed form of DELE1 (S-DELE1) in response to mitochondrial stress. In terms of biological role, metabolic-stress sensing protein kinase that phosphorylates the alpha subunit of eukaryotic translation initiation factor 2 (EIF2S1/eIF-2-alpha) in response to various stress conditions. Key activator of the integrated stress response (ISR) required for adaptation to various stress, such as heme deficiency, oxidative stress, osmotic shock, mitochondrial dysfunction and heat shock. EIF2S1/eIF-2-alpha phosphorylation in response to stress converts EIF2S1/eIF-2-alpha in a global protein synthesis inhibitor, leading to a global attenuation of cap-dependent translation, while concomitantly initiating the preferential translation of ISR-specific mRNAs, such as the transcriptional activator ATF4, and hence allowing ATF4-mediated reprogramming. Acts as a key sensor of heme-deficiency: in normal conditions, binds hemin via a cysteine thiolate and histidine nitrogenous coordination, leading to inhibit the protein kinase activity. This binding occurs with moderate affinity, allowing it to sense the heme concentration within the cell: heme depletion relieves inhibition and stimulates kinase activity, activating the ISR. Thanks to this unique heme-sensing capacity, plays a crucial role to shut off protein synthesis during acute heme-deficient conditions. In red blood cells (RBCs), controls hemoglobin synthesis ensuring a coordinated regulation of the synthesis of its heme and globin moieties. It thereby plays an essential protective role for RBC survival in anemias of iron deficiency. Iron deficiency also triggers activation by full-length DELE1. Also activates the ISR in response to mitochondrial dysfunction: HRI/EIF2AK1 protein kinase activity is activated upon binding to the processed form of DELE1 (S-DELE1), thereby promoting the ATF4-mediated reprogramming. Also acts as an activator of mitophagy in response to mitochondrial damage: catalyzes phosphorylation of eIF-2-alpha (EIF2S1) following activation by S-DELE1, thereby promoting mitochondrial localization of EIF2S1, triggering PRKN-independent mitophagy. This is Eukaryotic translation initiation factor 2-alpha kinase 1 from Homo sapiens (Human).